We begin with the raw amino-acid sequence, 237 residues long: Orotidine 5'-phosphate decarboxylase (237 aa).

Substrate-binding positions include Asp11, Lys34, Asp61–Thr70, Thr123, Arg185, Gln194, Gly214, and Arg215. Lys63 serves as the catalytic Proton donor.

This sequence belongs to the OMP decarboxylase family. Type 1 subfamily. Homodimer.

The catalysed reaction is orotidine 5'-phosphate + H(+) = UMP + CO2. Its pathway is pyrimidine metabolism; UMP biosynthesis via de novo pathway; UMP from orotate: step 2/2. Catalyzes the decarboxylation of orotidine 5'-monophosphate (OMP) to uridine 5'-monophosphate (UMP). The polypeptide is Orotidine 5'-phosphate decarboxylase (Ligilactobacillus salivarius (strain UCC118) (Lactobacillus salivarius)).